A 320-amino-acid polypeptide reads, in one-letter code: Beta-ketoacyl-[acyl-carrier-protein] synthase III (320 aa).

Active-site residues include cysteine 114 and histidine 247. The ACP-binding stretch occupies residues glutamine 248 to arginine 252. Asparagine 277 is an active-site residue.

Belongs to the thiolase-like superfamily. FabH family. In terms of assembly, homodimer.

Its subcellular location is the cytoplasm. It catalyses the reaction malonyl-[ACP] + acetyl-CoA + H(+) = 3-oxobutanoyl-[ACP] + CO2 + CoA. It participates in lipid metabolism; fatty acid biosynthesis. Catalyzes the condensation reaction of fatty acid synthesis by the addition to an acyl acceptor of two carbons from malonyl-ACP. Catalyzes the first condensation reaction which initiates fatty acid synthesis and may therefore play a role in governing the total rate of fatty acid production. Possesses both acetoacetyl-ACP synthase and acetyl transacylase activities. Its substrate specificity determines the biosynthesis of branched-chain and/or straight-chain of fatty acids. This chain is Beta-ketoacyl-[acyl-carrier-protein] synthase III, found in Neisseria meningitidis serogroup C (strain 053442).